The chain runs to 602 residues: Elongation factor 4 (602 aa).

The 190-residue stretch at 7–196 folds into the tr-type G domain; sequence SKIRNFCIIA…HPQNEIKSPT (190 aa). GTP contacts are provided by residues 19–24 and 136–139; these read DHGKST and NKVD.

It belongs to the TRAFAC class translation factor GTPase superfamily. Classic translation factor GTPase family. LepA subfamily.

The protein resides in the cell inner membrane. It catalyses the reaction GTP + H2O = GDP + phosphate + H(+). Functionally, required for accurate and efficient protein synthesis under certain stress conditions. May act as a fidelity factor of the translation reaction, by catalyzing a one-codon backward translocation of tRNAs on improperly translocated ribosomes. Back-translocation proceeds from a post-translocation (POST) complex to a pre-translocation (PRE) complex, thus giving elongation factor G a second chance to translocate the tRNAs correctly. Binds to ribosomes in a GTP-dependent manner. This is Elongation factor 4 from Prochlorococcus marinus (strain MIT 9515).